The following is a 267-amino-acid chain: 3-methyl-2-oxobutanoate hydroxymethyltransferase (267 aa).

Positions 42 and 86 each coordinate Mg(2+). 3-methyl-2-oxobutanoate contacts are provided by residues 42-43 (DS), Asp-86, and Lys-116. Glu-118 contacts Mg(2+). Residue Glu-185 is the Proton acceptor of the active site.

It belongs to the PanB family. In terms of assembly, homodecamer; pentamer of dimers. It depends on Mg(2+) as a cofactor.

It localises to the cytoplasm. The enzyme catalyses 3-methyl-2-oxobutanoate + (6R)-5,10-methylene-5,6,7,8-tetrahydrofolate + H2O = 2-dehydropantoate + (6S)-5,6,7,8-tetrahydrofolate. It functions in the pathway cofactor biosynthesis; (R)-pantothenate biosynthesis; (R)-pantoate from 3-methyl-2-oxobutanoate: step 1/2. In terms of biological role, catalyzes the reversible reaction in which hydroxymethyl group from 5,10-methylenetetrahydrofolate is transferred onto alpha-ketoisovalerate to form ketopantoate. The chain is 3-methyl-2-oxobutanoate hydroxymethyltransferase from Parasynechococcus marenigrum (strain WH8102).